The primary structure comprises 179 residues: Large ribosomal subunit protein uL6 (179 aa).

It belongs to the universal ribosomal protein uL6 family. Part of the 50S ribosomal subunit.

Its function is as follows. This protein binds to the 23S rRNA, and is important in its secondary structure. It is located near the subunit interface in the base of the L7/L12 stalk, and near the tRNA binding site of the peptidyltransferase center. This is Large ribosomal subunit protein uL6 from Mycobacterium avium (strain 104).